A 65-amino-acid polypeptide reads, in one-letter code: Large ribosomal subunit protein bL35 (65 aa).

It belongs to the bacterial ribosomal protein bL35 family.

The sequence is that of Large ribosomal subunit protein bL35 from Sodalis glossinidius (strain morsitans).